The chain runs to 304 residues: MVAEGLCQCYIRRMSTGGPHGAAPDRSCLARDTEGRSPCKNCQGCTQGAADPIPIRILMADSDVEQAPSVSVLPRNKILILAPAGKAYQAEVIRDLFNIEASESDRIVRDVKWSNKYYEVDLDLYIDSYESLQTWGAEFCSDECADLRDVVAGIFLVFEETEDAETFQQLIEDCHFTDERVLVACDLSSAEHPASLERALEVHDVALVRWRERGTNELGEQQGRERVRELLDIHPWSERMLRMHASTAAALAELDPLQADIPLDSVVTRIKQARERYLEITDVHAADEYAARIAHELTEQLLPE.

It belongs to the IRC6 family.

Involved in gross chromosomal rearrangements (GCRs) and telomere healing. The sequence is that of Increased recombination centers protein 6 (IRC6) from Eremothecium gossypii (strain ATCC 10895 / CBS 109.51 / FGSC 9923 / NRRL Y-1056) (Yeast).